We begin with the raw amino-acid sequence, 298 residues long: Ribose-phosphate pyrophosphokinase (298 aa).

ATP contacts are provided by residues 33–35 (DGE) and 91–92 (RQ). Positions 125 and 164 each coordinate Mg(2+). Residue K187 is part of the active site. 2 residues coordinate D-ribose 5-phosphate: R189 and D224.

It belongs to the ribose-phosphate pyrophosphokinase family. Class III (archaeal) subfamily. Mg(2+) is required as a cofactor.

It is found in the cytoplasm. It catalyses the reaction D-ribose 5-phosphate + ATP = 5-phospho-alpha-D-ribose 1-diphosphate + AMP + H(+). Its pathway is metabolic intermediate biosynthesis; 5-phospho-alpha-D-ribose 1-diphosphate biosynthesis; 5-phospho-alpha-D-ribose 1-diphosphate from D-ribose 5-phosphate (route I): step 1/1. In terms of biological role, involved in the biosynthesis of the central metabolite phospho-alpha-D-ribosyl-1-pyrophosphate (PRPP) via the transfer of pyrophosphoryl group from ATP to 1-hydroxyl of ribose-5-phosphate (Rib-5-P). The chain is Ribose-phosphate pyrophosphokinase from Methanobrevibacter smithii (strain ATCC 35061 / DSM 861 / OCM 144 / PS).